The sequence spans 147 residues: Low molecular weight protein-tyrosine-phosphatase Wzb (147 aa).

The Nucleophile role is filled by C9. R15 is a catalytic residue. D115 functions as the Proton donor in the catalytic mechanism.

It belongs to the low molecular weight phosphotyrosine protein phosphatase family.

The catalysed reaction is O-phospho-L-tyrosyl-[protein] + H2O = L-tyrosyl-[protein] + phosphate. The protein operates within glycan metabolism; exopolysaccharide biosynthesis. In terms of biological role, dephosphorylates Wzc. Required for the extracellular polysaccharide colanic acid synthesis. Probably involved in the export of colanic acid from the cell to medium. Involved in protection of cells against contact-dependent growth inhibition (CDI). This chain is Low molecular weight protein-tyrosine-phosphatase Wzb (wzb), found in Escherichia coli O157:H7.